A 296-amino-acid chain; its full sequence is Probable lipid kinase YegS-like (296 aa).

The DAGKc domain occupies 1–130 (MPHTLLILNG…IDLAQVNGEH (130 aa)). ATP-binding positions include threonine 37, 63 to 69 (GDGTINE), and threonine 92. Residues leucine 212, aspartate 215, and leucine 217 each coordinate Mg(2+). Glutamate 268 serves as the catalytic Proton acceptor.

It belongs to the diacylglycerol/lipid kinase family. YegS lipid kinase subfamily. The cofactor is Mg(2+). Ca(2+) is required as a cofactor.

Its subcellular location is the cytoplasm. In terms of biological role, probably phosphorylates lipids; the in vivo substrate is unknown. The chain is Probable lipid kinase YegS-like from Yersinia pseudotuberculosis serotype I (strain IP32953).